Here is a 782-residue protein sequence, read N- to C-terminus: Hypersensitive to pore-forming toxin protein 40 (782 aa).

Residues 138 to 203 (ESEIVPGAMY…TLFVSDQFSI (66 aa)) enclose the Tudor; degenerate domain. Polar residues-rich tracts occupy residues 332–346 (SVNPVASSHPTSSSM) and 413–443 (FESTKSDISPQNNQNVEETSTPTVPPNSTIQ). Disordered stretches follow at residues 332-351 (SVNPVASSHPTSSSMDDCPY), 413-448 (FESTKSDISPQNNQNVEETSTPTVPPNSTIQENEED), 472-492 (IERPNTPLPTSSKNSEHNMSE), and 617-672 (VAQG…LEDP). Residues 617–634 (VAQGSNAPKTAPNDSVNS) show a composition bias toward polar residues. Residues 638-662 (DDIHETDKRGNHCKSVTEDPKDNKD) are compositionally biased toward basic and acidic residues.

The protein localises to the cytoplasm. It localises to the perinuclear region. This Caenorhabditis elegans protein is Hypersensitive to pore-forming toxin protein 40.